We begin with the raw amino-acid sequence, 227 residues long: Uracil-DNA glycosylase (227 aa).

Asp-64 (proton acceptor) is an active-site residue.

The protein belongs to the uracil-DNA glycosylase (UDG) superfamily. UNG family.

Its subcellular location is the cytoplasm. The catalysed reaction is Hydrolyzes single-stranded DNA or mismatched double-stranded DNA and polynucleotides, releasing free uracil.. Excises uracil residues from the DNA which can arise as a result of misincorporation of dUMP residues by DNA polymerase or due to deamination of cytosine. The chain is Uracil-DNA glycosylase from Erwinia tasmaniensis (strain DSM 17950 / CFBP 7177 / CIP 109463 / NCPPB 4357 / Et1/99).